A 387-amino-acid polypeptide reads, in one-letter code: Succinate--CoA ligase [ADP-forming] subunit beta (387 aa).

An ATP-grasp domain is found at 9-236; it reads KELFAKHNVP…RAATDPLELK (228 aa). Residues lysine 45, 52–54, serine 94, and glutamate 99 contribute to the ATP site; that span reads GRG. Mg(2+) contacts are provided by asparagine 191 and aspartate 205. Residues asparagine 256 and 318 to 320 contribute to the substrate site; that span reads GIT.

It belongs to the succinate/malate CoA ligase beta subunit family. Heterotetramer of two alpha and two beta subunits. The cofactor is Mg(2+).

It carries out the reaction succinate + ATP + CoA = succinyl-CoA + ADP + phosphate. The catalysed reaction is GTP + succinate + CoA = succinyl-CoA + GDP + phosphate. Its pathway is carbohydrate metabolism; tricarboxylic acid cycle; succinate from succinyl-CoA (ligase route): step 1/1. Functionally, succinyl-CoA synthetase functions in the citric acid cycle (TCA), coupling the hydrolysis of succinyl-CoA to the synthesis of either ATP or GTP and thus represents the only step of substrate-level phosphorylation in the TCA. The beta subunit provides nucleotide specificity of the enzyme and binds the substrate succinate, while the binding sites for coenzyme A and phosphate are found in the alpha subunit. The protein is Succinate--CoA ligase [ADP-forming] subunit beta of Mycobacterium tuberculosis (strain CDC 1551 / Oshkosh).